Reading from the N-terminus, the 179-residue chain is ATP synthase subunit delta (179 aa).

Belongs to the ATPase delta chain family. F-type ATPases have 2 components, F(1) - the catalytic core - and F(0) - the membrane proton channel. F(1) has five subunits: alpha(3), beta(3), gamma(1), delta(1), epsilon(1). F(0) has three main subunits: a(1), b(2) and c(10-14). The alpha and beta chains form an alternating ring which encloses part of the gamma chain. F(1) is attached to F(0) by a central stalk formed by the gamma and epsilon chains, while a peripheral stalk is formed by the delta and b chains.

The protein localises to the cell membrane. Its function is as follows. F(1)F(0) ATP synthase produces ATP from ADP in the presence of a proton or sodium gradient. F-type ATPases consist of two structural domains, F(1) containing the extramembraneous catalytic core and F(0) containing the membrane proton channel, linked together by a central stalk and a peripheral stalk. During catalysis, ATP synthesis in the catalytic domain of F(1) is coupled via a rotary mechanism of the central stalk subunits to proton translocation. In terms of biological role, this protein is part of the stalk that links CF(0) to CF(1). It either transmits conformational changes from CF(0) to CF(1) or is implicated in proton conduction. This chain is ATP synthase subunit delta, found in Staphylococcus haemolyticus (strain JCSC1435).